Here is a 42-residue protein sequence, read N- to C-terminus: Photosystem I reaction center subunit IX (42 aa).

A helical membrane pass occupies residues 7–27; the sequence is YLSVAPVLSTLWFGSLAGLLI.

The protein belongs to the PsaJ family.

The protein localises to the plastid. Its subcellular location is the chloroplast thylakoid membrane. Its function is as follows. May help in the organization of the PsaE and PsaF subunits. The chain is Photosystem I reaction center subunit IX from Lepidium virginicum (Virginia pepperweed).